The primary structure comprises 119 residues: Large ribosomal subunit protein bL19 (119 aa).

Belongs to the bacterial ribosomal protein bL19 family.

Functionally, this protein is located at the 30S-50S ribosomal subunit interface and may play a role in the structure and function of the aminoacyl-tRNA binding site. The protein is Large ribosomal subunit protein bL19 of Pseudoalteromonas translucida (strain TAC 125).